Consider the following 1564-residue polypeptide: Superkiller complex protein 3 (1564 aa).

An N-acetylserine modification is found at S2. 20 TPR repeats span residues 6 to 39 (VKTA…EKNN), 40 to 73 (YNAW…EPDQ), 272 to 305 (GPGL…SPVC), 307 to 339 (SGWY…VDNL), 386 to 419 (PGLL…YPDL), 420 to 453 (AEVH…DTEV), 455 to 492 (EYHY…DTYM), 493 to 527 (GKVF…DDTD), 564 to 597 (KWAW…DPKD), 598 to 631 (FNCW…NPES), 633 to 665 (YSVF…KEDY), 679 to 713 (MAKA…RADV), 790 to 824 (AQHL…DSNN), 826 to 860 (LYWN…EQIN), 861 to 894 (AVAW…DPSY), 980 to 1013 (APAF…LQTA), 1020 to 1054 (NVAI…LEDI), 1056 to 1084 (GFAL…VESE), 1326 to 1359 (KWSL…NPDQ), and 1400 to 1433 (VPAW…ASQR).

This sequence belongs to the SKI3 family. As to quaternary structure, component of the SKI complex which consists of SKIC2, SKIC3 and SKIC8. Interacts with PAF1. Widely expressed with the highest levels observed in vascular tissues, lymph node, pituitary, lung and intestine. Not expressed in the liver.

Its subcellular location is the cytoplasm. The protein resides in the nucleus. Its function is as follows. Component of the SKI complex, a multiprotein complex that assists the RNA-degrading exosome during the mRNA decay and quality-control pathways. The SKI complex catalyzes mRNA extraction from 80S ribosomal complexes in the 3'-5' direction and channels mRNA to the cytosolic exosome for degradation. SKI-mediated extraction of mRNA from stalled ribosomes allow binding of the Pelota-HBS1L complex and subsequent ribosome disassembly by ABCE1 for ribosome recycling. In the nucleus, the SKI complex associates with transcriptionally active genes in a manner dependent on PAF1 complex (PAF1C). The polypeptide is Superkiller complex protein 3 (Homo sapiens (Human)).